Here is a 360-residue protein sequence, read N- to C-terminus: Photosystem II protein D1 (360 aa).

The next 3 helical transmembrane spans lie at 29 to 46 (YIGWFGVLMIPCLLTATC), 118 to 133 (HFLIGVASYMGREWEL), and 142 to 156 (WICVAFSAPVAAATA). Residue His118 coordinates chlorophyll a. Tyr126 is a binding site for pheophytin a. Positions 170 and 189 each coordinate [CaMn4O5] cluster. A helical membrane pass occupies residues 197-218 (FHMAGVAGVFGGALFSAMHGSL). His198 contacts chlorophyll a. A quinone contacts are provided by residues His215 and 264–265 (SF). His215 is a binding site for Fe cation. Residue His272 coordinates Fe cation. Residues 274 to 288 (FLGAWPVVGIWLTAI) traverse the membrane as a helical segment. [CaMn4O5] cluster is bound by residues His332, Glu333, Asp342, and Ala344. A propeptide spanning residues 345-360 (SNSVVPVALTAPSVEA) is cleaved from the precursor.

The protein belongs to the reaction center PufL/M/PsbA/D family. As to quaternary structure, PSII is composed of 1 copy each of membrane proteins PsbA, PsbB, PsbC, PsbD, PsbE, PsbF, PsbH, PsbI, PsbJ, PsbK, PsbL, PsbM, PsbT, PsbX, PsbY, PsbZ, Psb30/Ycf12, at least 3 peripheral proteins of the oxygen-evolving complex and a large number of cofactors. It forms dimeric complexes. It depends on The D1/D2 heterodimer binds P680, chlorophylls that are the primary electron donor of PSII, and subsequent electron acceptors. It shares a non-heme iron and each subunit binds pheophytin, quinone, additional chlorophylls, carotenoids and lipids. D1 provides most of the ligands for the Mn4-Ca-O5 cluster of the oxygen-evolving complex (OEC). There is also a Cl(-1) ion associated with D1 and D2, which is required for oxygen evolution. The PSII complex binds additional chlorophylls, carotenoids and specific lipids. as a cofactor. Post-translationally, tyr-161 forms a radical intermediate that is referred to as redox-active TyrZ, YZ or Y-Z. In terms of processing, C-terminally processed by CTPA; processing is essential to allow assembly of the oxygen-evolving complex and thus photosynthetic growth.

It is found in the plastid. The protein localises to the chloroplast thylakoid membrane. It catalyses the reaction 2 a plastoquinone + 4 hnu + 2 H2O = 2 a plastoquinol + O2. Functionally, photosystem II (PSII) is a light-driven water:plastoquinone oxidoreductase that uses light energy to abstract electrons from H(2)O, generating O(2) and a proton gradient subsequently used for ATP formation. It consists of a core antenna complex that captures photons, and an electron transfer chain that converts photonic excitation into a charge separation. The D1/D2 (PsbA/PsbD) reaction center heterodimer binds P680, the primary electron donor of PSII as well as several subsequent electron acceptors. The chain is Photosystem II protein D1 from Cyanidioschyzon merolae (strain NIES-3377 / 10D) (Unicellular red alga).